The primary structure comprises 500 residues: Catalase (500 aa).

Residues His59 and Asn131 contribute to the active site. Tyr339 serves as a coordination point for heme.

The protein belongs to the catalase family. Heme is required as a cofactor.

It carries out the reaction 2 H2O2 = O2 + 2 H2O. In terms of biological role, decomposes hydrogen peroxide into water and oxygen; serves to protect cells from the toxic effects of hydrogen peroxide. The polypeptide is Catalase (katA) (Neisseria gonorrhoeae).